The chain runs to 258 residues: Snake venom serine protease 2 (258 aa).

Positions 1–18 are cleaved as a signal peptide; that stretch reads MVLIRVLANLLILQLSYA. Positions 19 to 24 are excised as a propeptide; the sequence is QKSSEL. The Peptidase S1 domain occupies 25–249; sequence VFGGRPCNIN…YNDWVQSIIA (225 aa). 6 disulfide bridges follow: Cys31–Cys163, Cys50–Cys66, Cys98–Cys256, Cys142–Cys210, Cys174–Cys189, and Cys200–Cys225. Asn44 carries N-linked (GlcNAc...) asparagine glycosylation. Active-site charge relay system residues include His65 and Asp110. 2 N-linked (GlcNAc...) asparagine glycosylation sites follow: Asn122 and Asn185. The active-site Charge relay system is the Ser204.

The protein belongs to the peptidase S1 family. Snake venom subfamily. As to quaternary structure, monomer. In terms of tissue distribution, expressed by the venom gland.

The protein resides in the secreted. With respect to regulation, inhibited by PMSF at 2 mM concentration but not by EDTA. Functionally, snake venom serine protease that may act in the hemostasis system of the prey. Has weak fibrinogen clotting activity. Possesses amidolysis activity towards S-2251 (substrate for plasmin) but has no hydrolytic activity with S-2302 (plasma kallikrein substrate) or S-2238 (thrombin substrate). The chain is Snake venom serine protease 2 from Protobothrops jerdonii (Jerdon's pitviper).